A 397-amino-acid chain; its full sequence is Protein Rep52 (397 aa).

The region spanning 84 to 239 (DPQYAASVFL…LDHDFGKVTK (156 aa)) is the SF3 helicase domain. 110-117 (GPATTGKT) provides a ligand contact to ATP. Positions 265–296 (GGAKKRPAPSDADISEPKRVRESVAQPSTSDA) are disordered.

As to quaternary structure, homooligomer. Interacts with host PRKX.

The protein localises to the host nucleus. Its function is as follows. Plays a critical role during packaging of viral DNA into empty capsids, where they are thought to be part of the packaging motor complex. The single stranded genomic DNA is packaged in a 3' to 5' direction and requires the association between viral DNA and Rep40. Regulates host PKA activity by interacting with host PRKX as a mechanism to interfere with helper virus propagation and to promote its own replication. This Mammalia (AAV-2) protein is Protein Rep52 (Rep52).